The chain runs to 344 residues: Phenylalanine--tRNA ligase alpha subunit (344 aa).

Mg(2+) is bound at residue Glu-256.

It belongs to the class-II aminoacyl-tRNA synthetase family. Phe-tRNA synthetase alpha subunit type 1 subfamily. In terms of assembly, tetramer of two alpha and two beta subunits. It depends on Mg(2+) as a cofactor.

The protein localises to the cytoplasm. The catalysed reaction is tRNA(Phe) + L-phenylalanine + ATP = L-phenylalanyl-tRNA(Phe) + AMP + diphosphate + H(+). This chain is Phenylalanine--tRNA ligase alpha subunit (pheS), found in Halalkalibacterium halodurans (strain ATCC BAA-125 / DSM 18197 / FERM 7344 / JCM 9153 / C-125) (Bacillus halodurans).